We begin with the raw amino-acid sequence, 455 residues long: uncharacterized protein (455 aa).

Residues Met-1–Ser-20 are compositionally biased toward low complexity. Disordered stretches follow at residues Met-1 to Thr-234 and Arg-258 to Lys-304. 5 stretches are compositionally biased toward basic and acidic residues: residues Glu-35 to Gln-46, Ser-61 to Ser-75, Arg-129 to Asp-143, Arg-156 to Arg-166, and Pro-173 to Gly-186. A compositionally biased stretch (polar residues) spans Ser-213–Arg-224. Over residues Ala-260 to Ala-271 the composition is skewed to low complexity.

This is an uncharacterized protein from Arabidopsis thaliana (Mouse-ear cress).